The chain runs to 758 residues: 5-methyltetrahydropteroyltriglutamate--homocysteine methyltransferase (758 aa).

Residues 17–20 (RELK) and Lys117 contribute to the 5-methyltetrahydropteroyltri-L-glutamate site. L-homocysteine is bound by residues 434–436 (IGS) and Glu487. Residues 434-436 (IGS) and Glu487 each bind L-methionine. 5-methyltetrahydropteroyltri-L-glutamate contacts are provided by residues 518-519 (RC) and Trp564. Asp602 contributes to the L-homocysteine binding site. Asp602 serves as a coordination point for L-methionine. A 5-methyltetrahydropteroyltri-L-glutamate-binding site is contributed by Glu608. Positions 644, 646, and 668 each coordinate Zn(2+). Catalysis depends on His697, which acts as the Proton donor. Position 729 (Cys729) interacts with Zn(2+).

It belongs to the vitamin-B12 independent methionine synthase family. Zn(2+) serves as cofactor.

It catalyses the reaction 5-methyltetrahydropteroyltri-L-glutamate + L-homocysteine = tetrahydropteroyltri-L-glutamate + L-methionine. It functions in the pathway amino-acid biosynthesis; L-methionine biosynthesis via de novo pathway; L-methionine from L-homocysteine (MetE route): step 1/1. In terms of biological role, catalyzes the transfer of a methyl group from 5-methyltetrahydrofolate to homocysteine resulting in methionine formation. The protein is 5-methyltetrahydropteroyltriglutamate--homocysteine methyltransferase of Yersinia pestis (strain Pestoides F).